The following is a 552-amino-acid chain: 4-coumarate--CoA ligase-like 4 (552 aa).

Residues 182–205 (ISATTPDPARRKDRVTQDDPATLL) are disordered. Positions 189–198 (PARRKDRVTQ) are enriched in basic and acidic residues. Residues S207, S208, G209, T210, T211, and K215 each coordinate ATP. Y256 serves as a coordination point for (E)-4-coumaroyl-AMP. Position 277 (K277) interacts with CoA. Positions 279–346 (ELPEMLRSIN…EKYPQVEILQ (68 aa)) are SBD1. G324, Q346, G347, and T351 together coordinate (E)-4-coumaroyl-AMP. Positions 346, 347, 351, 432, and 447 each coordinate ATP. The SBD2 stretch occupies residues 347-411 (GYGLTESTAI…IRGPYVMKGY (65 aa)). 2 residues coordinate (E)-4-coumaroyl-AMP: K449 and K453. CoA contacts are provided by K455 and G456. Residue K538 participates in ATP binding.

It belongs to the ATP-dependent AMP-binding enzyme family. Mg(2+) serves as cofactor.

The enzyme catalyses (E)-4-coumarate + ATP + CoA = (E)-4-coumaroyl-CoA + AMP + diphosphate. It catalyses the reaction (E)-4-coumarate + ATP + H(+) = (E)-4-coumaroyl-AMP + diphosphate. It carries out the reaction (E)-4-coumaroyl-AMP + CoA = (E)-4-coumaroyl-CoA + AMP + H(+). Carboxylate--CoA ligase that may use 4-coumarate as substrate. Follows a two-step reaction mechanism, wherein the carboxylate substrate first undergoes adenylation by ATP, followed by a thioesterification in the presence of CoA to yield the final CoA thioester. The sequence is that of 4-coumarate--CoA ligase-like 4 (4CLL4) from Oryza sativa subsp. japonica (Rice).